The primary structure comprises 262 residues: Imidazole glycerol phosphate synthase subunit HisF (262 aa).

Active-site residues include D11 and D130.

The protein belongs to the HisA/HisF family. In terms of assembly, heterodimer of HisH and HisF.

Its subcellular location is the cytoplasm. The enzyme catalyses 5-[(5-phospho-1-deoxy-D-ribulos-1-ylimino)methylamino]-1-(5-phospho-beta-D-ribosyl)imidazole-4-carboxamide + L-glutamine = D-erythro-1-(imidazol-4-yl)glycerol 3-phosphate + 5-amino-1-(5-phospho-beta-D-ribosyl)imidazole-4-carboxamide + L-glutamate + H(+). Its pathway is amino-acid biosynthesis; L-histidine biosynthesis; L-histidine from 5-phospho-alpha-D-ribose 1-diphosphate: step 5/9. Functionally, IGPS catalyzes the conversion of PRFAR and glutamine to IGP, AICAR and glutamate. The HisF subunit catalyzes the cyclization activity that produces IGP and AICAR from PRFAR using the ammonia provided by the HisH subunit. The sequence is that of Imidazole glycerol phosphate synthase subunit HisF from Rhodopirellula baltica (strain DSM 10527 / NCIMB 13988 / SH1).